A 226-amino-acid polypeptide reads, in one-letter code: MKSATRSATTAFFIPQETGAIRPIGGISKRSFDVLIAILALIALSPLFLLVMGLVKFSDGGSIFYGHRRIGHNGQTFKCLKFRTMMENGDRVLQEFFKSNPAAYEEWRTTRKLQDDPRVTVVGSVLRKLSLDELPQLLNIIRGEMSIVGPRPVVEDELELYDSAAEFYLRSRPGLTGLWQISGRNDVSYATRVAFDTHYVQNWSLLADLVIVFKTIPAVCLSRGSY.

The helical transmembrane segment at 34-54 (VLIAILALIALSPLFLLVMGL) threads the bilayer.

This sequence belongs to the bacterial sugar transferase family.

The protein localises to the cell membrane. It functions in the pathway glycan metabolism; exopolysaccharide biosynthesis. Needed for the addition of the first sugar (galactose) to the isoprenoid carrier. May function as a sugar transferase. The chain is Exopolysaccharide production protein ExoY (exoY) from Sinorhizobium fredii (strain NBRC 101917 / NGR234).